Consider the following 72-residue polypeptide: UPF0270 protein YheU (72 aa).

Belongs to the UPF0270 family.

The protein is UPF0270 protein YheU of Escherichia coli (strain UTI89 / UPEC).